The chain runs to 85 residues: Protein AC4 (85 aa).

Gly-2 carries the N-myristoyl glycine; by host lipid modification. A disordered region spans residues 44-63 (RAPMSNPTSRKTGTVSNGDC). Over residues 46-62 (PMSNPTSRKTGTVSNGD) the composition is skewed to polar residues.

This sequence belongs to the geminiviridae protein AC4/C4 family.

It localises to the host cell membrane. Functionally, pathogenicity determinant. May act as a suppressor of RNA-mediated gene silencing, also known as post-transcriptional gene silencing (PTGS), a mechanism of plant viral defense that limits the accumulation of viral RNAs. The chain is Protein AC4 from Potato yellow mosaic virus (isolate Venezuela) (PYMV).